Here is a 393-residue protein sequence, read N- to C-terminus: uncharacterized protein (393 aa).

Residues 345–393 form a disordered region; sequence PNKWATDDAARREMERTRKARYRAKNRAVADPEDSPPGKRLRRGPKSST. Residues 349–361 show a composition bias toward basic and acidic residues; sequence ATDDAARREMERT. The segment covering 383–393 has biased composition (basic residues); sequence KRLRRGPKSST.

This is an uncharacterized protein from Ictalurid herpesvirus 1 (strain Auburn) (IcHV-1).